The primary structure comprises 93 residues: uncharacterized protein (93 aa).

Belongs to the BolA/IbaG family.

This is an uncharacterized protein from Sinorhizobium sp.